Consider the following 153-residue polypeptide: Late embryogenesis abundant protein B19.4 (153 aa).

The disordered stretch occupies residues 1-153 (MASGQQERSE…IDESKFKTKS (153 aa)). Basic and acidic residues-rich tracts occupy residues 7–19 (ERSE…REGE), 32–122 (EAQE…EMGR), and 133–153 (GGER…KTKS). 4 consecutive repeat copies span residues 43–62 (RGGQ…EMGH), 63–82 (KGGE…EMGH), 83–102 (KGGE…EMGH), and 103–122 (KGGE…EMGR). Residues 43–122 (RGGQTRKEQL…GEEGYREMGR (80 aa)) form a 4 X 20 AA tandem repeats region.

It belongs to the small hydrophilic plant seed protein family.

Lea proteins are late embryonic proteins abundant in higher plant seed embryos. The chain is Late embryogenesis abundant protein B19.4 (B19.4) from Hordeum vulgare (Barley).